A 217-amino-acid chain; its full sequence is 3,4-dihydroxy-2-butanone 4-phosphate synthase (217 aa).

D-ribulose 5-phosphate contacts are provided by residues 37-38 (RE), Asp42, 150-154 (RRGHT), and Glu174. Mg(2+) is bound at residue Glu38. His153 contacts Mg(2+).

This sequence belongs to the DHBP synthase family. As to quaternary structure, homodimer. The cofactor is Mg(2+). It depends on Mn(2+) as a cofactor.

The catalysed reaction is D-ribulose 5-phosphate = (2S)-2-hydroxy-3-oxobutyl phosphate + formate + H(+). It participates in cofactor biosynthesis; riboflavin biosynthesis; 2-hydroxy-3-oxobutyl phosphate from D-ribulose 5-phosphate: step 1/1. Functionally, catalyzes the conversion of D-ribulose 5-phosphate to formate and 3,4-dihydroxy-2-butanone 4-phosphate. This is 3,4-dihydroxy-2-butanone 4-phosphate synthase from Syntrophotalea carbinolica (strain DSM 2380 / NBRC 103641 / GraBd1) (Pelobacter carbinolicus).